The following is a 97-amino-acid chain: MSHISADDVRKVAKLARLNLPDDKIATYTGQLESILGYVSQLEQVDTTGVPETTRAVEVTNVTRQDGVDPTPVREEILNQAPQREGDFFRVPKILAD.

Belongs to the GatC family. In terms of assembly, heterotrimer of A, B and C subunits.

It catalyses the reaction L-glutamyl-tRNA(Gln) + L-glutamine + ATP + H2O = L-glutaminyl-tRNA(Gln) + L-glutamate + ADP + phosphate + H(+). The enzyme catalyses L-aspartyl-tRNA(Asn) + L-glutamine + ATP + H2O = L-asparaginyl-tRNA(Asn) + L-glutamate + ADP + phosphate + 2 H(+). Functionally, allows the formation of correctly charged Asn-tRNA(Asn) or Gln-tRNA(Gln) through the transamidation of misacylated Asp-tRNA(Asn) or Glu-tRNA(Gln) in organisms which lack either or both of asparaginyl-tRNA or glutaminyl-tRNA synthetases. The reaction takes place in the presence of glutamine and ATP through an activated phospho-Asp-tRNA(Asn) or phospho-Glu-tRNA(Gln). The chain is Aspartyl/glutamyl-tRNA(Asn/Gln) amidotransferase subunit C from Synechococcus sp. (strain CC9902).